The primary structure comprises 190 residues: Ras-like GTP-binding protein RhoL (190 aa).

Residue 18 to 25 coordinates GTP; that stretch reads GDGMVGKT. The Effector region signature appears at 40–48; the sequence is YIPTVFDNH. GTP-binding positions include 65–69 and 123–126; these read DTAGQ and TKLD. The residue at position 187 (cysteine 187) is a Cysteine methyl ester. A lipid anchor (S-geranylgeranyl cysteine) is attached at cysteine 187. A propeptide spans 188–190 (removed in mature form); it reads KIL.

This sequence belongs to the small GTPase superfamily. Rho family. In terms of tissue distribution, highly expressed in the embryonic cephalic mesoderm starting from stage 6 and fading by stage 11. Hemocyte precursor cells.

It is found in the cell membrane. Its function is as follows. Essential for the maturation of hemocytes. The protein is Ras-like GTP-binding protein RhoL (RhoL) of Drosophila melanogaster (Fruit fly).